We begin with the raw amino-acid sequence, 179 residues long: Phospholipase A2 (179 aa).

Residues 1–21 (MHALRSSVLALWLCLHVSVRA) form the signal peptide. Residues 22–39 (WMTYRSANGLDEYEPEDR) constitute a propeptide that is removed on maturation. Ca(2+) is bound by residues Trp-47, Gly-49, and Gly-51. Cystine bridges form between Cys-48/Cys-70, Cys-69/Cys-109, Cys-76/Cys-102, Cys-100/Cys-133, and Cys-142/Cys-150. His-73 is an active-site residue. Asp-74 lines the Ca(2+) pocket. The active site involves Asp-103. Residue Asn-112 is glycosylated (N-linked (GlcNAc...) asparagine).

Requires Ca(2+) as cofactor. As to expression, expressed by the venom gland.

It is found in the secreted. The enzyme catalyses a 1,2-diacyl-sn-glycero-3-phosphocholine + H2O = a 1-acyl-sn-glycero-3-phosphocholine + a fatty acid + H(+). In terms of biological role, PLA2 catalyzes the calcium-dependent hydrolysis of the 2-acyl groups in 3-sn-phosphoglycerides. This Xylocopa appendiculata circumvolans (Japanese carpenter bee) protein is Phospholipase A2.